Consider the following 105-residue polypeptide: MWALTVFVTILAAAIPITGVTGVCEDMAGNGRAPGEVWTEDSCTLYECGEDDSGELNTLFVAGCPLSLEIPKGCHYEPRSGNFPYCCPLLVCPDYVDKKNVRRRI.

An N-terminal signal peptide occupies residues 1-22; the sequence is MWALTVFVTILAAAIPITGVTG.

It belongs to the scoloptoxin-16 family. Contains 4 disulfide bonds. Expressed by the venom gland.

The protein resides in the secreted. The protein is U-scoloptoxin(16)-Sm4a of Scolopendra morsitans (Tanzanian blue ringleg centipede).